The chain runs to 319 residues: Phosphoenolpyruvate transferase (319 aa).

Residue Asp50 coordinates 7,8-didemethyl-8-hydroxy-5-deazariboflavin.

It belongs to the CofD family. In terms of assembly, homodimer. The cofactor is Mg(2+).

It catalyses the reaction enolpyruvoyl-2-diphospho-5'-guanosine + 7,8-didemethyl-8-hydroxy-5-deazariboflavin = dehydro coenzyme F420-0 + GMP + H(+). It participates in cofactor biosynthesis; coenzyme F420 biosynthesis. Its function is as follows. Catalyzes the transfer of the phosphoenolpyruvate moiety from enoylpyruvoyl-2-diphospho-5'-guanosine (EPPG) to 7,8-didemethyl-8-hydroxy-5-deazariboflavin (FO) with the formation of dehydro coenzyme F420-0 and GMP. The sequence is that of Phosphoenolpyruvate transferase from Streptomyces avermitilis (strain ATCC 31267 / DSM 46492 / JCM 5070 / NBRC 14893 / NCIMB 12804 / NRRL 8165 / MA-4680).